Here is a 585-residue protein sequence, read N- to C-terminus: A-type ATP synthase subunit A (585 aa).

231 to 238 (GPFGSGKT) provides a ligand contact to ATP.

This sequence belongs to the ATPase alpha/beta chains family. In terms of assembly, has multiple subunits with at least A(3), B(3), C, D, E, F, H, I and proteolipid K(x).

The protein localises to the cell membrane. The catalysed reaction is ATP + H2O + 4 H(+)(in) = ADP + phosphate + 5 H(+)(out). Component of the A-type ATP synthase that produces ATP from ADP in the presence of a proton gradient across the membrane. The A chain is the catalytic subunit. The sequence is that of A-type ATP synthase subunit A from Thermococcus sibiricus (strain DSM 12597 / MM 739).